Here is a 146-residue protein sequence, read N- to C-terminus: Small ribosomal subunit protein uS5 (146 aa).

An S5 DRBM domain is found at 8-71 (FQEAIVKIGR…DDAFKSLVTV (64 aa)).

Belongs to the universal ribosomal protein uS5 family. Part of the 30S ribosomal subunit. Contacts proteins S4 and S8.

With S4 and S12 plays an important role in translational accuracy. Functionally, located at the back of the 30S subunit body where it stabilizes the conformation of the head with respect to the body. This is Small ribosomal subunit protein uS5 from Aliarcobacter butzleri (strain RM4018) (Arcobacter butzleri).